The following is a 158-amino-acid chain: NAD(P)H-quinone oxidoreductase subunit J, chloroplastic (158 aa).

It belongs to the complex I 30 kDa subunit family. NDH is composed of at least 16 different subunits, 5 of which are encoded in the nucleus.

It is found in the plastid. The protein localises to the chloroplast thylakoid membrane. The catalysed reaction is a plastoquinone + NADH + (n+1) H(+)(in) = a plastoquinol + NAD(+) + n H(+)(out). It carries out the reaction a plastoquinone + NADPH + (n+1) H(+)(in) = a plastoquinol + NADP(+) + n H(+)(out). Functionally, NDH shuttles electrons from NAD(P)H:plastoquinone, via FMN and iron-sulfur (Fe-S) centers, to quinones in the photosynthetic chain and possibly in a chloroplast respiratory chain. The immediate electron acceptor for the enzyme in this species is believed to be plastoquinone. Couples the redox reaction to proton translocation, and thus conserves the redox energy in a proton gradient. The sequence is that of NAD(P)H-quinone oxidoreductase subunit J, chloroplastic from Daucus carota (Wild carrot).